The sequence spans 629 residues: Chaperone protein HtpG (629 aa).

Positions 1-337 are a; substrate-binding; it reads MAASKETMQF…SSDLPLNVSR (337 aa). The segment at 338 to 554 is b; it reads EILQGNRVID…ERDMALYMQQ (217 aa). Residues 555-629 are c; the sequence is LLKQAGHEIS…INQLMLALAG (75 aa).

It belongs to the heat shock protein 90 family. In terms of assembly, homodimer.

Its subcellular location is the cytoplasm. Molecular chaperone. Has ATPase activity. In Acidithiobacillus ferrooxidans (strain ATCC 23270 / DSM 14882 / CIP 104768 / NCIMB 8455) (Ferrobacillus ferrooxidans (strain ATCC 23270)), this protein is Chaperone protein HtpG.